Here is a 91-residue protein sequence, read N- to C-terminus: Large ribosomal subunit protein uL23c (91 aa).

This sequence belongs to the universal ribosomal protein uL23 family. Part of the 50S ribosomal subunit.

It localises to the plastid. The protein resides in the chloroplast. Its function is as follows. Binds to 23S rRNA. The chain is Large ribosomal subunit protein uL23c (rpl23) from Marchantia polymorpha (Common liverwort).